The following is a 202-amino-acid chain: uncharacterized protein (202 aa).

An Isoglutamyl lysine isopeptide (Lys-Gln) (interchain with Q-Cter in protein Pup) cross-link involves residue Lys136.

This is an uncharacterized protein from Mycobacterium tuberculosis (strain ATCC 25618 / H37Rv).